The primary structure comprises 170 residues: uncharacterized protein (170 aa).

3 helical membrane-spanning segments follow: residues 31-51 (ILAVVNGSITIILSIIVFYIF), 58-78 (LFLITAGILTVFVFLYGLLLF), and 133-153 (IDFIVMIGMITISVIVVMLLF).

The protein to M.jannaschii MJ0554 and MJ0587.

Its subcellular location is the cell membrane. This is an uncharacterized protein from Methanocaldococcus jannaschii (strain ATCC 43067 / DSM 2661 / JAL-1 / JCM 10045 / NBRC 100440) (Methanococcus jannaschii).